A 205-amino-acid polypeptide reads, in one-letter code: FMN-dependent NADH:quinone oxidoreductase (205 aa).

FMN-binding positions include S10 and 16–18 (SVS).

The protein belongs to the azoreductase type 1 family. Homodimer. It depends on FMN as a cofactor.

The catalysed reaction is 2 a quinone + NADH + H(+) = 2 a 1,4-benzosemiquinone + NAD(+). It carries out the reaction N,N-dimethyl-1,4-phenylenediamine + anthranilate + 2 NAD(+) = 2-(4-dimethylaminophenyl)diazenylbenzoate + 2 NADH + 2 H(+). In terms of biological role, quinone reductase that provides resistance to thiol-specific stress caused by electrophilic quinones. Functionally, also exhibits azoreductase activity. Catalyzes the reductive cleavage of the azo bond in aromatic azo compounds to the corresponding amines. This chain is FMN-dependent NADH:quinone oxidoreductase, found in Agrobacterium fabrum (strain C58 / ATCC 33970) (Agrobacterium tumefaciens (strain C58)).